The primary structure comprises 971 residues: Mating-type switching protein swi1 (971 aa).

Phosphoserine is present on residues S528, S536, and S970.

As to quaternary structure, fork protection complex (FPC) consisting of swi1 and swi3 interacts with mat1 cis-acting sequences and mat1-proximal polar-terminator of replication (RTS1).

It is found in the nucleus. In terms of biological role, forms a fork protection complex (FPC) with swi3. FPC coordinates leading and lagging strand synthesis and moves with the replication fork. It is required for programmed fork-pausing which is necessary for mating-type switching. FPC stabilizes replication forks in a configuration that is recognized by replication checkpoint sensors. It is involved in termination at the mat1-proximal polar-terminator of replication (RTS1) and also required for activation of the Rad53-like checkpoint kinase cds1. The protein is Mating-type switching protein swi1 (swi1) of Schizosaccharomyces pombe (strain 972 / ATCC 24843) (Fission yeast).